A 308-amino-acid polypeptide reads, in one-letter code: tRNA pseudouridine synthase B (308 aa).

Asp47 (nucleophile) is an active-site residue.

Belongs to the pseudouridine synthase TruB family. Type 1 subfamily.

The catalysed reaction is uridine(55) in tRNA = pseudouridine(55) in tRNA. Responsible for synthesis of pseudouridine from uracil-55 in the psi GC loop of transfer RNAs. This chain is tRNA pseudouridine synthase B, found in Xanthomonas campestris pv. campestris (strain 8004).